A 196-amino-acid polypeptide reads, in one-letter code: Small ribosomal subunit protein uS4c (196 aa).

Residues 89–157 enclose the S4 RNA-binding domain; it reads MRLDNILFRL…VQNYIASSDP (69 aa).

The protein belongs to the universal ribosomal protein uS4 family. In terms of assembly, part of the 30S ribosomal subunit. Contacts protein S5. The interaction surface between S4 and S5 is involved in control of translational fidelity.

Its subcellular location is the plastid. It is found in the chloroplast. In terms of biological role, one of the primary rRNA binding proteins, it binds directly to 16S rRNA where it nucleates assembly of the body of the 30S subunit. Functionally, with S5 and S12 plays an important role in translational accuracy. The chain is Small ribosomal subunit protein uS4c (rps4) from Elymus canadensis (Canada wild rye).